The primary structure comprises 546 residues: Chaperonin GroEL 2 (546 aa).

ATP is bound by residues 30–33 (TLGP), lysine 51, 87–91 (DGTTT), glycine 415, and aspartate 496.

This sequence belongs to the chaperonin (HSP60) family. Forms a cylinder of 14 subunits composed of two heptameric rings stacked back-to-back. Interacts with the co-chaperonin GroES.

The protein localises to the cytoplasm. The catalysed reaction is ATP + H2O + a folded polypeptide = ADP + phosphate + an unfolded polypeptide.. In terms of biological role, together with its co-chaperonin GroES, plays an essential role in assisting protein folding. The GroEL-GroES system forms a nano-cage that allows encapsulation of the non-native substrate proteins and provides a physical environment optimized to promote and accelerate protein folding. In Bradyrhizobium sp. (strain ORS 278), this protein is Chaperonin GroEL 2.